Here is an 88-residue protein sequence, read N- to C-terminus: Small ribosomal subunit protein bS20 (88 aa).

The tract at residues 1–21 is disordered; it reads MANSAQAKKRARQNVKARKHN. A compositionally biased stretch (basic residues) spans 7-21; that stretch reads AKKRARQNVKARKHN.

It belongs to the bacterial ribosomal protein bS20 family.

Functionally, binds directly to 16S ribosomal RNA. The chain is Small ribosomal subunit protein bS20 from Acinetobacter baumannii (strain AB307-0294).